Reading from the N-terminus, the 643-residue chain is 1-deoxy-D-xylulose-5-phosphate synthase (643 aa).

Residues H72 and 113–115 each bind thiamine diphosphate; that span reads GHA. D144 contributes to the Mg(2+) binding site. Thiamine diphosphate contacts are provided by residues 145 to 146, N174, Y287, and E370; that span reads GA. N174 contributes to the Mg(2+) binding site.

Belongs to the transketolase family. DXPS subfamily. In terms of assembly, homodimer. Requires Mg(2+) as cofactor. The cofactor is thiamine diphosphate.

The enzyme catalyses D-glyceraldehyde 3-phosphate + pyruvate + H(+) = 1-deoxy-D-xylulose 5-phosphate + CO2. It participates in metabolic intermediate biosynthesis; 1-deoxy-D-xylulose 5-phosphate biosynthesis; 1-deoxy-D-xylulose 5-phosphate from D-glyceraldehyde 3-phosphate and pyruvate: step 1/1. Its function is as follows. Catalyzes the acyloin condensation reaction between C atoms 2 and 3 of pyruvate and glyceraldehyde 3-phosphate to yield 1-deoxy-D-xylulose-5-phosphate (DXP). The polypeptide is 1-deoxy-D-xylulose-5-phosphate synthase (Parasynechococcus marenigrum (strain WH8102)).